A 69-amino-acid chain; its full sequence is MIRKFLIVLIIAYQRYISPFTAPSCRFYPSCSEYARQSLIKYGLIKGVVKTCGRLCRCHPFHPGGYDPV.

This sequence belongs to the UPF0161 family.

It localises to the cell inner membrane. In terms of biological role, could be involved in insertion of integral membrane proteins into the membrane. The polypeptide is Putative membrane protein insertion efficiency factor (Syntrophotalea carbinolica (strain DSM 2380 / NBRC 103641 / GraBd1) (Pelobacter carbinolicus)).